Reading from the N-terminus, the 54-residue chain is uncharacterized protein (54 aa).

This is an uncharacterized protein from Rhizobium etli.